The chain runs to 121 residues: NADH-quinone oxidoreductase subunit A 1 (121 aa).

3 consecutive transmembrane segments (helical) span residues 6–26, 62–82, and 90–110; these read FPIF…LSIG, LVAM…PWAV, and FYGL…YYYI.

Belongs to the complex I subunit 3 family. NDH-1 is composed of 14 different subunits. Subunits NuoA, H, J, K, L, M, N constitute the membrane sector of the complex.

The protein localises to the cell inner membrane. The enzyme catalyses a quinone + NADH + 5 H(+)(in) = a quinol + NAD(+) + 4 H(+)(out). In terms of biological role, NDH-1 shuttles electrons from NADH, via FMN and iron-sulfur (Fe-S) centers, to quinones in the respiratory chain. The immediate electron acceptor for the enzyme in this species is believed to be a menaquinone. Couples the redox reaction to proton translocation (for every two electrons transferred, four hydrogen ions are translocated across the cytoplasmic membrane), and thus conserves the redox energy in a proton gradient. In Chloroherpeton thalassium (strain ATCC 35110 / GB-78), this protein is NADH-quinone oxidoreductase subunit A 1.